The sequence spans 281 residues: MGSQGSPVKSYDYLLKFLLVGDSDVGKGEILESLQDGAAESPYAYSNGIDYKTTTILLDGRRVKLELWDTSGQGRFCTIFRSYSRGAQGILLVYDITNRWSFDGIDRWIKEIDEHAPGVPRILVGNRLHLAFKRQVPTEQARAYAEKNCMTFFEVSPLCNFNVIESFTELSRIVLMRHGMEKIWRPNRVFSLQDLCCRAIVSCTPVHLIDKLPLPVTIKSHLKSFSMANGMNAVMMHGRSYSLASGAGGGGSKGNSLKRSKSIRPPQSPPQNCSRSNCKIS.

GTP-binding residues include serine 23, glycine 26, lysine 27, and serine 46. The tract at residues 41-49 (SPYAYSNGI) is switch-I. Serine 46 and aspartate 69 together coordinate Mg(2+). GTP contacts are provided by glycine 72, asparagine 126, and arginine 127. The tract at residues 72–88 (GQGRFCTIFRSYSRGAQ) is switch-II. In terms of domain architecture, SOCS box spans 175–228 (LMRHGMEKIWRPNRVFSLQDLCCRAIVSCTPVHLIDKLPLPVTIKSHLKSFSMA). The disordered stretch occupies residues 245–281 (SGAGGGGSKGNSLKRSKSIRPPQSPPQNCSRSNCKIS). Polar residues predominate over residues 270 to 281 (PQNCSRSNCKIS). Cysteine 273 carries S-palmitoyl cysteine lipidation. Residue cysteine 278 is the site of S-geranylgeranyl cysteine attachment.

The protein belongs to the small GTPase superfamily. Rab family. Component of the cullin-5-RING E3 ubiquitin-protein ligase complex (ECS(RAB40C) complex) composed of CUL5, Elongin BC (ELOB and ELOC), RNF7/RBX2 and RAB40C. Interacts with protein phosphatase 6 (PP6) complex components ANKRD28, ANKRD52, PPP6C, PP6R1 and PP6R2; the interaction leads to ANKRD28 ubiquitination and decreased PP6 activity. Interacts with DAB2IP; DAB2IP acts as a GAP for RAB40C. Requires Mg(2+) as cofactor.

The protein localises to the cell membrane. Its subcellular location is the cytoplasm. It is found in the cytosol. The protein resides in the golgi apparatus membrane. It carries out the reaction GTP + H2O = GDP + phosphate + H(+). It functions in the pathway protein modification; protein ubiquitination. Regulated by guanine nucleotide exchange factors (GEFs) which promote the exchange of bound GDP for free GTP. Regulated by GTPase activating proteins (GAPs) including DAB2IP, which increase the GTP hydrolysis activity. Inhibited by GDP dissociation inhibitors (GDIs). In terms of biological role, RAB40C small GTPase acts as substrate-recognition component of the ECS(RAB40C) E3 ubiquitin ligase complex which mediates the ubiquitination and subsequent proteasomal degradation of target proteins. The Rab40 subfamily belongs to the Rab family that are key regulators of intracellular membrane trafficking, from the formation of transport vesicles to their fusion with membranes. Rabs cycle between an inactive GDP-bound form and an active GTP-bound form that is able to recruit to membranes different sets of downstream effectors directly responsible for vesicle formation, movement, tethering and fusion. As part of the ECS(RAB40C) complex, mediates ANKRD28 ubiquitination and degradation, thereby inhibiting protein phosphatase 6 (PP6) complex activity and focal adhesion assembly during cell migration. Also negatively regulate lipid droplets accumulation in a GTP-dependent manner. The sequence is that of Ras-related protein Rab-40C from Homo sapiens (Human).